Consider the following 450-residue polypeptide: MRECISIHVGQAGVQIGNACWELYCLEHGIQPDGQMPSDKTIGGGDDSFNTFFSETGAGKHVPRAVFVDLEPTVVDEVRTGTYRQLFHPEQLITGKEDAANNYARGHYTIGKEIVDLVLDRIRKLADLCTGLQGFLIFHSFGGGTGSGFASLLMERLSVDYGKKSKLEFAIYPAPQVSTAVVEPYNSILTTHTTLEHSDCAFMVDNEAIYDICRRNLDIERPTYTNLNRLIGQIVSSITASLRFDGALNVDLTEFQTNLVPYPRIHFPLATYAPVISAEKAYHEQLSVAEITNACFEPANQMVKCDPRHGKYMACCMLYRGDVVPKDVNAAIATIKTKRTIQFVDWCPTGFKVGINYQPPTVVPGGDLAKVQRAVCMLSNTTAIAEAWARLDHKFDLMYAKRAFVHWYVGEGMEEGEFSEAREDLAALEKDYEEVGVDSVEAEAEEGEEY.

The MREC motif signature appears at 1 to 4 (MREC). Gln-11 is a binding site for GTP. At Lys-40 the chain carries N6-acetyllysine. GTP contacts are provided by Glu-71, Ser-140, Gly-144, Thr-145, Thr-179, Asn-206, and Asn-228. Glu-71 provides a ligand contact to Mg(2+). Glu-254 is a catalytic residue. Tyr-282 is modified (3'-nitrotyrosine). A Phosphoserine modification is found at Ser-439. Tyr-450 carries the 3'-nitrotyrosine modification.

The protein belongs to the tubulin family. Dimer of alpha and beta chains. A typical microtubule is a hollow water-filled tube with an outer diameter of 25 nm and an inner diameter of 15 nM. Alpha-beta heterodimers associate head-to-tail to form protofilaments running lengthwise along the microtubule wall with the beta-tubulin subunit facing the microtubule plus end conferring a structural polarity. Microtubules usually have 13 protofilaments but different protofilament numbers can be found in some organisms and specialized cells. Mg(2+) is required as a cofactor. Some glutamate residues at the C-terminus are polyglutamylated, resulting in polyglutamate chains on the gamma-carboxyl group. Polyglutamylation plays a key role in microtubule severing by spastin (SPAST). SPAST preferentially recognizes and acts on microtubules decorated with short polyglutamate tails: severing activity by SPAST increases as the number of glutamates per tubulin rises from one to eight, but decreases beyond this glutamylation threshold. Glutamylation is also involved in cilia motility. In terms of processing, some glutamate residues at the C-terminus are monoglycylated but not polyglycylated due to the absence of functional TTLL10 in human. Monoglycylation is mainly limited to tubulin incorporated into cilia and flagella axonemes, which is required for their stability and maintenance. Flagella glycylation controls sperm motility. Both polyglutamylation and monoglycylation can coexist on the same protein on adjacent residues, and lowering glycylation levels increases polyglutamylation, and reciprocally. Post-translationally, acetylation of alpha chains at Lys-40 is located inside the microtubule lumen. This modification has been correlated with increased microtubule stability, intracellular transport and ciliary assembly. Methylation of alpha chains at Lys-40 is found in mitotic microtubules and is required for normal mitosis and cytokinesis contributing to genomic stability. In terms of processing, nitration of Tyr-450 is irreversible and interferes with normal dynein intracellular distribution. Post-translationally, undergoes a tyrosination/detyrosination cycle, the cyclic removal and re-addition of a C-terminal tyrosine residue by the enzymes tubulin tyrosine carboxypeptidase (MATCAP1/KIAA0895L, VASH1 or VASH2) and tubulin tyrosine ligase (TTL), respectively. Tyrosination promotes microtubule interaction with CAP-Gly domain-containing proteins such as CLIP1, CLIP2 and DCTN1. Tyrosination regulates the initiation of dynein-dynactin motility via interaction with DCTN1, which brings the dynein-dynactin complex into contact with microtubules. In neurons, tyrosinated tubulins mediate the initiation of retrograde vesicle transport. In terms of processing, detyrosination is involved in metaphase plate congression by guiding chromosomes during mitosis: detyrosination promotes interaction with CENPE, promoting pole-proximal transport of chromosomes toward the equator. Detyrosination increases microtubules-dependent mechanotransduction in dystrophic cardiac and skeletal muscle. In cardiomyocytes, detyrosinated microtubules are required to resist to contractile compression during contraction: detyrosination promotes association with desmin (DES) at force-generating sarcomeres, leading to buckled microtubules and mechanical resistance to contraction. In terms of tissue distribution, expressed in testis.

Its subcellular location is the cytoplasm. It is found in the cytoskeleton. The enzyme catalyses GTP + H2O = GDP + phosphate + H(+). In terms of biological role, tubulin is the major constituent of microtubules, a cylinder consisting of laterally associated linear protofilaments composed of alpha- and beta-tubulin heterodimers. Microtubules grow by the addition of GTP-tubulin dimers to the microtubule end, where a stabilizing cap forms. Below the cap, tubulin dimers are in GDP-bound state, owing to GTPase activity of alpha-tubulin. This Homo sapiens (Human) protein is Tubulin alpha-3C chain (TUBA3C).